Reading from the N-terminus, the 407-residue chain is Phosphopentomutase (407 aa).

Mn(2+) is bound by residues Asp-10, Asp-306, His-311, Asp-347, His-348, and His-359.

This sequence belongs to the phosphopentomutase family. Mn(2+) serves as cofactor.

Its subcellular location is the cytoplasm. It catalyses the reaction 2-deoxy-alpha-D-ribose 1-phosphate = 2-deoxy-D-ribose 5-phosphate. The enzyme catalyses alpha-D-ribose 1-phosphate = D-ribose 5-phosphate. Its pathway is carbohydrate degradation; 2-deoxy-D-ribose 1-phosphate degradation; D-glyceraldehyde 3-phosphate and acetaldehyde from 2-deoxy-alpha-D-ribose 1-phosphate: step 1/2. Isomerase that catalyzes the conversion of deoxy-ribose 1-phosphate (dRib-1-P) and ribose 1-phosphate (Rib-1-P) to deoxy-ribose 5-phosphate (dRib-5-P) and ribose 5-phosphate (Rib-5-P), respectively. The polypeptide is Phosphopentomutase (Buchnera aphidicola subsp. Acyrthosiphon pisum (strain 5A)).